Here is a 97-residue protein sequence, read N- to C-terminus: YcgL domain-containing protein Pfl01_1389 (97 aa).

Residues 3–87 (RICSIYQSSK…AEEEYIEHLP (85 aa)) enclose the YcgL domain.

This is YcgL domain-containing protein Pfl01_1389 from Pseudomonas fluorescens (strain Pf0-1).